Here is a 272-residue protein sequence, read N- to C-terminus: Bis(5'-nucleosyl)-tetraphosphatase, symmetrical (272 aa).

Belongs to the Ap4A hydrolase family.

The enzyme catalyses P(1),P(4)-bis(5'-adenosyl) tetraphosphate + H2O = 2 ADP + 2 H(+). Its function is as follows. Hydrolyzes diadenosine 5',5'''-P1,P4-tetraphosphate to yield ADP. The chain is Bis(5'-nucleosyl)-tetraphosphatase, symmetrical from Shewanella frigidimarina (strain NCIMB 400).